Here is a 443-residue protein sequence, read N- to C-terminus: MTKVAIIGAGPCGLSALRSFEQAEKNGEKIPEIVCFDKQEDWGGLWNYSWRTGSDQYGDPVPNSMYRYLWSNGPKECLEFADYSFDEHFGKPIPSFPPREVLYNYILGRVKKGNLKSKIKFNTTVTNVSYDNENFEVTYRDKKNDKISKDIFDYVIVSTGHFSVPFIPEYPGMKAFPGRIMHSHDFRDAEEFRGKNVVVLGSSYSAEDVALQCHKYGAKSVTIGYRHNPMGFKWPEGMKEVFHLDRLEGNKAIFKDGHVQETDAVILCTGYLHHFPFMSEDLKLKTGNRLYPPMLYKGVVWQNNHKLMYLGMQDQFHTFNMFDCQAWFARDVIMGKIKTPNDSEIEKDINKWVSMEEKLENADQMIDFQTEYTKELHELSDYPKIDFELIRKTFKEWEHHKVENIMTYRNKSFASPVTGSVGPIHHTPWEEAMDDSLKTFLNK.

FAD is bound by residues Asp37, Gln39, Leu45, and Trp46. Trp70 and Asn72 together coordinate NADP(+). Positions 72 and 125 each coordinate FAD. Positions 170, 202, 203, 205, and 226 each coordinate NADP(+). Residues Gln315 and Thr318 each coordinate FAD. Arg409 serves as a coordination point for NADP(+).

This sequence belongs to the FMO family. It depends on FAD as a cofactor.

The enzyme catalyses trimethylamine + NADPH + O2 = trimethylamine N-oxide + NADP(+) + H2O. Catalyzes the oxidation of trimethylamine (TMA) to produce trimethylamine N-oxide (TMAO). In vitro, has a broad substrate specificity, oxidizing many nitrogen- and sulfur-containing compounds, including dimethylamine (DMA), dimethylsulfide (DMS) and dimethylsulfoxide (DMSO). The sequence is that of Trimethylamine monooxygenase from Pelagibacter ubique (strain HTCC1002).